The primary structure comprises 95 residues: Protein TusB (95 aa).

It belongs to the DsrH/TusB family. Heterohexamer, formed by a dimer of trimers. The hexameric TusBCD complex contains 2 copies each of TusB, TusC and TusD. The TusBCD complex interacts with TusE.

It localises to the cytoplasm. Part of a sulfur-relay system required for 2-thiolation of 5-methylaminomethyl-2-thiouridine (mnm(5)s(2)U) at tRNA wobble positions. In Buchnera aphidicola subsp. Schizaphis graminum (strain Sg), this protein is Protein TusB.